The following is a 211-amino-acid chain: Holliday junction branch migration complex subunit RuvA (211 aa).

The tract at residues 1–64 (MIGRLRGMLV…EDAQLLYGFA (64 aa)) is domain I. Positions 65 to 143 (NKVERKLFRL…DWQAQQIHLV (79 aa)) are domain II. The flexible linker stretch occupies residues 144–162 (SDDGVIPEQLSAELSQETT). The domain III stretch occupies residues 163–211 (FVNDNKGDAINALLSLGYKQVQADKAVKSVYNRGMSSENIIRDALKSMI).

It belongs to the RuvA family. Homotetramer. Forms an RuvA(8)-RuvB(12)-Holliday junction (HJ) complex. HJ DNA is sandwiched between 2 RuvA tetramers; dsDNA enters through RuvA and exits via RuvB. An RuvB hexamer assembles on each DNA strand where it exits the tetramer. Each RuvB hexamer is contacted by two RuvA subunits (via domain III) on 2 adjacent RuvB subunits; this complex drives branch migration. In the full resolvosome a probable DNA-RuvA(4)-RuvB(12)-RuvC(2) complex forms which resolves the HJ.

It localises to the cytoplasm. Functionally, the RuvA-RuvB-RuvC complex processes Holliday junction (HJ) DNA during genetic recombination and DNA repair, while the RuvA-RuvB complex plays an important role in the rescue of blocked DNA replication forks via replication fork reversal (RFR). RuvA specifically binds to HJ cruciform DNA, conferring on it an open structure. The RuvB hexamer acts as an ATP-dependent pump, pulling dsDNA into and through the RuvAB complex. HJ branch migration allows RuvC to scan DNA until it finds its consensus sequence, where it cleaves and resolves the cruciform DNA. The protein is Holliday junction branch migration complex subunit RuvA of Colwellia psychrerythraea (strain 34H / ATCC BAA-681) (Vibrio psychroerythus).